The following is a 953-amino-acid chain: Leucine-rich repeat receptor protein kinase HPCA1 (953 aa).

The first 23 residues, 1 to 23 (MSSRTGASLLLILFFFQICSVSA), serve as a signal peptide directing secretion. At 24–558 (LTNGLDASAL…EVSSKSSNKS (535 aa)) the chain is on the extracellular side. LRR repeat units lie at residues 64–88 (NDRV…ISFL), 89–113 (SELR…IGNL), 115–137 (KLRN…IGTL), 138–162 (KELI…GLLS), 164–187 (LYWF…TSAP), and 192–216 (LLQT…LFSS). An N-linked (GlcNAc...) asparagine glycan is attached at Asn-182. Asn-217 is a glycosylation site (N-linked (GlcNAc...) asparagine). LRR repeat units follow at residues 218–241 (MSLI…LSLV), 242–265 (KTLT…LNNL), 266–290 (TNLN…SLTS), 292–311 (YTLD…SWIS), 313–337 (LPSL…FFSP), 339–361 (QLQT…TDVS), and 362–384 (SQLE…ANKV). Asn-264, Asn-284, and Asn-298 each carry an N-linked (GlcNAc...) asparagine glycan. The N-linked (GlcNAc...) asparagine glycan is linked to Asn-411. Intrachain disulfides connect Cys-421–Cys-424 and Cys-434–Cys-436. N-linked (GlcNAc...) asparagine glycosylation is found at Asn-456, Asn-459, Asn-510, and Asn-523. Residues 559-579 (ILIGAVVGVVVLLLLLTIAGI) traverse the membrane as a helical segment. Residues 580–953 (YALRQKKRAE…NFPASKLEPQ (374 aa)) lie on the Cytoplasmic side of the membrane. Phosphoserine occurs at positions 606 and 607. The Protein kinase domain occupies 631–905 (FSEANDVGGG…EVVKEIENIM (275 aa)). Residues 637–645 (VGGGGYGKV) and Lys-659 contribute to the ATP site. Residue Asp-755 is the Proton acceptor of the active site. Phosphothreonine occurs at positions 786, 789, and 790. The span at 912–921 (PNSDSATSSR) shows a compositional bias: polar residues. Residues 912–953 (PNSDSATSSRTYEDAIKGSGDPYGSESFQYSGNFPASKLEPQ) form a disordered region. A Phosphoserine modification is found at Ser-942.

It belongs to the protein kinase superfamily. Ser/Thr protein kinase family. In terms of processing, autophosphorylated at Ser-606, Ser-607, Thr-786, Thr-789, Thr-790 and Ser-942 in response to extracellular hydrogen peroxide. As to expression, widely expressed.

It localises to the cell membrane. It catalyses the reaction L-seryl-[protein] + ATP = O-phospho-L-seryl-[protein] + ADP + H(+). It carries out the reaction L-threonyl-[protein] + ATP = O-phospho-L-threonyl-[protein] + ADP + H(+). With respect to regulation, activated by autophosphorylation on serine and threonine residues in response to extracellular hydrogen peroxide. In terms of biological role, leucine-rich repeat receptor protein kinase that acts as sensor of extracellular hydrogen peroxide. Required for intracellular calcium influx in response to extracellular hydrogen peroxide. Mediates hydrogen peroxide-induced activation of calcium channels in guard cells and is required for stomatal closure. The protein is Leucine-rich repeat receptor protein kinase HPCA1 of Arabidopsis thaliana (Mouse-ear cress).